A 706-amino-acid chain; its full sequence is Ribosomal RNA large subunit methyltransferase K/L (706 aa).

The THUMP domain occupies 43 to 154 (LMYQSLLWSR…RDMASVALDL (112 aa)).

It belongs to the methyltransferase superfamily. RlmKL family.

The protein localises to the cytoplasm. The catalysed reaction is guanosine(2445) in 23S rRNA + S-adenosyl-L-methionine = N(2)-methylguanosine(2445) in 23S rRNA + S-adenosyl-L-homocysteine + H(+). It carries out the reaction guanosine(2069) in 23S rRNA + S-adenosyl-L-methionine = N(2)-methylguanosine(2069) in 23S rRNA + S-adenosyl-L-homocysteine + H(+). Functionally, specifically methylates the guanine in position 2445 (m2G2445) and the guanine in position 2069 (m7G2069) of 23S rRNA. The protein is Ribosomal RNA large subunit methyltransferase K/L of Yersinia pseudotuberculosis serotype O:1b (strain IP 31758).